The sequence spans 34 residues: Photosystem II reaction center protein M (34 aa).

A helical membrane pass occupies residues Gly7 to Ile27.

It belongs to the PsbM family. In terms of assembly, PSII is composed of 1 copy each of membrane proteins PsbA, PsbB, PsbC, PsbD, PsbE, PsbF, PsbH, PsbI, PsbJ, PsbK, PsbL, PsbM, PsbT, PsbX, PsbY, PsbZ, Psb30/Ycf12, peripheral proteins PsbO, CyanoQ (PsbQ), PsbU, PsbV and a large number of cofactors. It forms dimeric complexes.

The protein resides in the cellular thylakoid membrane. One of the components of the core complex of photosystem II (PSII). PSII is a light-driven water:plastoquinone oxidoreductase that uses light energy to abstract electrons from H(2)O, generating O(2) and a proton gradient subsequently used for ATP formation. It consists of a core antenna complex that captures photons, and an electron transfer chain that converts photonic excitation into a charge separation. This subunit is found at the monomer-monomer interface. This Synechococcus sp. (strain CC9605) protein is Photosystem II reaction center protein M.